The primary structure comprises 971 residues: Outer capsid protein VP2 (971 aa).

Belongs to the orbivirus VP2 family.

It is found in the virion. In terms of biological role, the VP2 protein is one of the two proteins (with VP5) which constitute the virus particle outer capsid. It is the major target of the host immunogenic response. This chain is Outer capsid protein VP2 (Segment-2), found in Epizootic hemorrhagic disease virus 1 (EHDV-1).